We begin with the raw amino-acid sequence, 772 residues long: Putative ribosomal protein S6 kinase alpha-2 (772 aa).

The region spanning 17-284 is the Protein kinase 1 domain; the sequence is FALLRVLGKG…VDEIKNHKFM (268 aa). ATP is bound by residues 23 to 31 and lysine 49; that span reads LGKGAYGKV. Catalysis depends on aspartate 145, which acts as the Proton acceptor. Residues serine 180, serine 342, and serine 347 each carry the phosphoserine; by autocatalysis modification. The AGC-kinase C-terminal domain maps to 285 to 353; sequence SSIDWDAAVK…VSPSVIFAND (69 aa). The 272-residue stretch at 382–653 folds into the Protein kinase 2 domain; the sequence is KSDAGLLGKG…MQELTAHMWL (272 aa). Residues 388 to 396 and lysine 411 each bind ATP; that span reads LGKGAFSVV. Aspartate 500 serves as the catalytic Proton acceptor. Residues 706-772 are disordered; that stretch reads RGIKRQSGDK…IRETRGSDSS (67 aa). Residue serine 712 is modified to Phosphoserine; by autocatalysis. Composition is skewed to polar residues over residues 718–727 and 739–748; these read SGNSKNSRVT and EMTSSTSRPS.

Belongs to the protein kinase superfamily. AGC Ser/Thr protein kinase family. S6 kinase subfamily. The cofactor is Mg(2+).

It catalyses the reaction L-seryl-[protein] + ATP = O-phospho-L-seryl-[protein] + ADP + H(+). The catalysed reaction is L-threonyl-[protein] + ATP = O-phospho-L-threonyl-[protein] + ADP + H(+). Its activity is regulated as follows. Activated by multiple phosphorylations on threonine and serine residues. Serine/threonine kinase that may play a role in mediating the mitogen- and stress-induced effects on transcription. May repress transcription via phosphorylation of 'Ser-1' of histone H2A. May phosphorylate histone H3. In Caenorhabditis elegans, this protein is Putative ribosomal protein S6 kinase alpha-2 (rskn-2).